The primary structure comprises 363 residues: Ribosomal RNA large subunit methyltransferase M (363 aa).

S-adenosyl-L-methionine-binding positions include serine 187, 220–223, aspartate 239, aspartate 259, and aspartate 276; that span reads CPGG. The Proton acceptor role is filled by lysine 305.

Belongs to the class I-like SAM-binding methyltransferase superfamily. RNA methyltransferase RlmE family. RlmM subfamily. As to quaternary structure, monomer.

Its subcellular location is the cytoplasm. The catalysed reaction is cytidine(2498) in 23S rRNA + S-adenosyl-L-methionine = 2'-O-methylcytidine(2498) in 23S rRNA + S-adenosyl-L-homocysteine + H(+). Catalyzes the 2'-O-methylation at nucleotide C2498 in 23S rRNA. The protein is Ribosomal RNA large subunit methyltransferase M of Shewanella loihica (strain ATCC BAA-1088 / PV-4).